Reading from the N-terminus, the 672-residue chain is DNA ligase (672 aa).

NAD(+) contacts are provided by residues 32 to 36 (DSEYD), 81 to 82 (SL), and E114. Catalysis depends on K116, which acts as the N6-AMP-lysine intermediate. 4 residues coordinate NAD(+): R137, E174, K291, and K315. Zn(2+) contacts are provided by C409, C412, C427, and C433. Residues 592–672 (VNENPFKEKT…EFLEIVNSFS (81 aa)) enclose the BRCT domain.

The protein belongs to the NAD-dependent DNA ligase family. LigA subfamily. Mg(2+) serves as cofactor. The cofactor is Mn(2+).

The enzyme catalyses NAD(+) + (deoxyribonucleotide)n-3'-hydroxyl + 5'-phospho-(deoxyribonucleotide)m = (deoxyribonucleotide)n+m + AMP + beta-nicotinamide D-nucleotide.. DNA ligase that catalyzes the formation of phosphodiester linkages between 5'-phosphoryl and 3'-hydroxyl groups in double-stranded DNA using NAD as a coenzyme and as the energy source for the reaction. It is essential for DNA replication and repair of damaged DNA. This Actinobacillus succinogenes (strain ATCC 55618 / DSM 22257 / CCUG 43843 / 130Z) protein is DNA ligase.